A 557-amino-acid polypeptide reads, in one-letter code: uncharacterized protein (557 aa).

A coiled-coil region spans residues 2–45 (NEDETSILNKKMEKIEVEMAEFERLGAEREKEAVERIVQEENQN). 4 disordered regions span residues 39–62 (VQEENQNPEVPSNDDASTDIKSRK), 101–127 (NRTYYKNSQGYRRKPKRDDYNNNRKNF), 356–402 (PSPS…YPSN), and 536–557 (ANATSQPLSNLDTGGSAPYDHI). 4 stretches are compositionally biased toward polar residues: residues 101 to 110 (NRTYYKNSQG), 358 to 380 (PSFQEEFPSTSKSPSATPGSSNA), 390 to 400 (DSATYPTSIYP), and 536 to 548 (ANATSQPLSNLDT).

The protein localises to the cytoplasm. It is found in the nucleus. This is an uncharacterized protein from Schizosaccharomyces pombe (strain 972 / ATCC 24843) (Fission yeast).